The chain runs to 317 residues: MLNPQLNRHGELIHLLSTEGLPRRIIEQILDLAATFVPAPGQEFPKLPLLHGKSVFNLFFENSTRTRTTFEIAAKRLSADVVNLNIAASSTSKGESLLDTIANLSAMQAGLFVVRHGASGAPYLIAQHVAPHVHVINAGDGRHAHPTQALLDMYTIRHHKGDFNQLTVAIVGDVLHSRVARSDIHALTTLGVPEVRVVAPATLLPEGLAQMGVRVCTDMEEGLRDADVVIMLRLQNERMRGALLPSAHEYFKHYGLTQARLALARPDAIVMHPGPMNRGVEIASEVADSGQAVILDQVTFGIAVRMAAMSLVAGVRP.

Carbamoyl phosphate contacts are provided by Arg65 and Thr66. Lys93 is a binding site for L-aspartate. Carbamoyl phosphate is bound by residues Arg115, His145, and Gln148. L-aspartate is bound by residues Arg178 and Arg233. Positions 274 and 275 each coordinate carbamoyl phosphate.

It belongs to the aspartate/ornithine carbamoyltransferase superfamily. ATCase family. Heterododecamer (2C3:3R2) of six catalytic PyrB chains organized as two trimers (C3), and six regulatory PyrI chains organized as three dimers (R2).

It catalyses the reaction carbamoyl phosphate + L-aspartate = N-carbamoyl-L-aspartate + phosphate + H(+). The protein operates within pyrimidine metabolism; UMP biosynthesis via de novo pathway; (S)-dihydroorotate from bicarbonate: step 2/3. In terms of biological role, catalyzes the condensation of carbamoyl phosphate and aspartate to form carbamoyl aspartate and inorganic phosphate, the committed step in the de novo pyrimidine nucleotide biosynthesis pathway. In Bordetella parapertussis (strain 12822 / ATCC BAA-587 / NCTC 13253), this protein is Aspartate carbamoyltransferase catalytic subunit.